We begin with the raw amino-acid sequence, 855 residues long: Homeobox-leucine zipper protein HOX33 (855 aa).

The tract at residues 1-21 (MAAAAVGGRGERLSSSSPTAA) is disordered. The segment at residues 26–89 (DAGKYVRYTP…NRRCREKQRK (64 aa)) is a DNA-binding region (homeobox). The stretch at 84-126 (REKQRKEASRLQTVNRKLNAMNKLLMEENDRLQKQVSRLVYEN) forms a coiled coil. Positions 168-390 (DANNPAGLLA…LRHIRQIAHE (223 aa)) constitute an START domain.

It belongs to the HD-ZIP homeobox family. Class III subfamily. In terms of tissue distribution, expressed in seedlings, roots, stems, leaf sheaths and blades and panicles.

It is found in the nucleus. In terms of biological role, probable transcription factor. The protein is Homeobox-leucine zipper protein HOX33 (HOX33) of Oryza sativa subsp. indica (Rice).